Consider the following 287-residue polypeptide: MKDRLAELQELSRSYDQQFPDGDNDFDAPREDIVFETDNILESLYRVIQDIQDENQLLLIDVRRLGRQNVRFLTSMRRLSSIKRDTNSIAKAIKTRGEGIHQKLRSMKELSEQAEARHGAHSAVARISHAQYSALARAFQQAMYEYNQAEMKQRDNCKIRIQRQLEIMGKDMSGEQIEDMFEQGKWDVFSENLLADLKGARAALNEIESRHRELLRLEGRIRDVHELFLQMAVLVEKQEDTLNVIELNVQKTLDYTGEAKAQVRKAVQYKKKNPCRTICCFCCPCVN.

A coiled-coil region spans residues 41-71 (LESLYRVIQDIQDENQLLLIDVRRLGRQNVR). One can recognise a t-SNARE coiled-coil homology domain in the interval 204-266 (LNEIESRHRE…GEAKAQVRKA (63 aa)).

The protein belongs to the syntaxin family. In terms of assembly, interacts with the SNARE proteins SNAP-23 and VAMP.

It localises to the membrane. It is found in the golgi apparatus. Its subcellular location is the trans-Golgi network membrane. Functionally, SNARE that acts to regulate protein transport between late endosomes and the trans-Golgi network. The chain is Syntaxin-11 (Stx11) from Mus musculus (Mouse).